The sequence spans 263 residues: Small ribosomal subunit protein eS4 (263 aa).

Residues 42–104 (LPLIIFLRNK…TGENFRLIYD (63 aa)) form the S4 RNA-binding domain. A Glycyl lysine isopeptide (Lys-Gly) (interchain with G-Cter in SUMO2) cross-link involves residue K230. The residue at position 233 (K233) is an N6-acetyllysine.

This sequence belongs to the eukaryotic ribosomal protein eS4 family. In terms of assembly, component of the small ribosomal subunit. Part of the small subunit (SSU) processome, composed of more than 70 proteins and the RNA chaperone small nucleolar RNA (snoRNA) U3. Identified in a IGF2BP1-dependent mRNP granule complex containing untranslated mRNAs.

Its subcellular location is the cytoplasm. The protein localises to the nucleus. It localises to the nucleolus. Its function is as follows. Component of the small ribosomal subunit. The ribosome is a large ribonucleoprotein complex responsible for the synthesis of proteins in the cell. Part of the small subunit (SSU) processome, first precursor of the small eukaryotic ribosomal subunit. During the assembly of the SSU processome in the nucleolus, many ribosome biogenesis factors, an RNA chaperone and ribosomal proteins associate with the nascent pre-rRNA and work in concert to generate RNA folding, modifications, rearrangements and cleavage as well as targeted degradation of pre-ribosomal RNA by the RNA exosome. The protein is Small ribosomal subunit protein eS4 (RPS4X) of Oryctolagus cuniculus (Rabbit).